The following is a 490-amino-acid chain: GTPase Der (490 aa).

2 consecutive EngA-type G domains span residues 3–166 and 196–369; these read PVIA…PRDD and IKIA…KSAV. GTP contacts are provided by residues 9–16, 56–60, and 118–121; these read GRPNVGKS, DTGGI, and NKVD. The tract at residues 162-189 is disordered; sequence FPRDDDEPAEGEEEEVVAEGEEAKRIPG. The span at 164 to 181 shows a compositional bias: acidic residues; it reads RDDDEPAEGEEEEVVAEG. GTP is bound by residues 202-209, 249-253, and 314-317; these read GRPNVGKS, DTAGV, and NKWD. In terms of domain architecture, KH-like spans 370-454; the sequence is TRWPTSRLTQ…PIRIEFKGGE (85 aa). The interval 453–490 is disordered; sequence GENPYEGNKNTLTDRQVNKKRRLMSHNKKASKKRRDKK. Residues 470 to 490 show a composition bias toward basic residues; the sequence is NKKRRLMSHNKKASKKRRDKK.

This sequence belongs to the TRAFAC class TrmE-Era-EngA-EngB-Septin-like GTPase superfamily. EngA (Der) GTPase family. Associates with the 50S ribosomal subunit.

Functionally, GTPase that plays an essential role in the late steps of ribosome biogenesis. This chain is GTPase Der, found in Pseudomonas fluorescens (strain Pf0-1).